The following is a 270-amino-acid chain: Interleukin-1 alpha (270 aa).

Residues 1–114 (MAKVPDLFED…HDLEETIQPR (114 aa)) constitute a propeptide that is removed on maturation. An N-linked (GlcNAc...) asparagine glycan is attached at N46. Residue K85 is modified to N6-acetyllysine. The nuclear localization signal (NLS) stretch occupies residues 85-89 (KKRRL). Residue S90 is modified to Phosphoserine. N139 is a glycosylation site (N-linked (GlcNAc...) asparagine).

Belongs to the IL-1 family. As to quaternary structure, monomer. Interacts with TMED10; the interaction mediates the translocation from the cytoplasm into the ERGIC (endoplasmic reticulum-Golgi intermediate compartment) and thereby secretion. Interacts with IL1R1. Interacts with S100A13; this interaction is the first step in the export of IL1A, followed by direct translocation of this complex across the plasma membrane. Post-translationally, acetylated within its nuclear localization sequence, which impacts subcellular localization. In terms of processing, proteolytic processed by CAPN1 in a calcium-dependent manner. Cleavage from 31 kDa precursor to 18 kDa biologically active molecules. Phosphorylated. Phosphorylation greatly enhances susceptibility to digestion and promotes the conversion of pre-IL1A alpha to the biologically active IL1A.

Its subcellular location is the nucleus. It is found in the cytoplasm. The protein resides in the secreted. In terms of biological role, cytokine constitutively present intracellularly in nearly all resting non-hematopoietic cells that plays an important role in inflammation and bridges the innate and adaptive immune systems. After binding to its receptor IL1R1 together with its accessory protein IL1RAP, forms the high affinity interleukin-1 receptor complex. Signaling involves the recruitment of adapter molecules such as MYD88, IRAK1 or IRAK4. In turn, mediates the activation of NF-kappa-B and the three MAPK pathways p38, p42/p44 and JNK pathways. Within the cell, acts as an alarmin and cell death results in its liberation in the extracellular space after disruption of the cell membrane to induce inflammation and alert the host to injury or damage. In addition to its role as a danger signal, which occurs when the cytokine is passively released by cell necrosis, directly senses DNA damage and acts as signal for genotoxic stress without loss of cell integrity. The chain is Interleukin-1 alpha from Rattus norvegicus (Rat).